A 1035-amino-acid chain; its full sequence is Unconventional myosin IC (1035 aa).

Residues 21–703 enclose the Myosin motor domain; the sequence is GVQDFVLLEN…TLFDTEDAYQ (683 aa). An ATP-binding site is contributed by 114-121; it reads GESGSGKT. Serine 304 bears the Phosphoserine mark. Threonine 310 bears the Phosphothreonine mark. The tract at residues 578–600 is actin-binding; that stretch reads LNNLMDILMCKEPSYIRCIKPND. IQ domains follow at residues 696-728, 729-751, and 752-779; these read FDTE…KYLK, LRAQ…AAKK, and RREA…FNEE. Residues 857 to 1035 form the TH1 domain; the sequence is KNNYASSVST…KGHLVIIGTQ (179 aa).

Belongs to the TRAFAC class myosin-kinesin ATPase superfamily. Myosin family. In terms of assembly, binds F-actin. As to expression, in the embryo, expressed in gastric caeca, midgut cells of the proventriculus, and in the mid and hindgut. In the larval and adult gut brush border, expressed in the microvilli. Also expressed at high levels in follicle cells during oogenesis.

The protein localises to the cytoplasm. The protein resides in the cell cortex. It localises to the cell membrane. Functionally, unconventional myosin that functions as actin-based motor protein with ATPase activity. Binds to membranes enriched in phosphatidylinositol 4-5-bisphosphate, and can glide along actin filaments when anchored to a lipid bilayer. Functions as antagonist for Myo31DF, an unconventional myosin with an essential role in the establishment of body left-right asymmetry. The chain is Unconventional myosin IC (Myo61F) from Drosophila melanogaster (Fruit fly).